The primary structure comprises 130 residues: MTFYSSGEEAQHQWKQLQTQQNKKNSPRPVTSSRDFRSRVQGNQSNTIFTHLTKSAANSQCQLQKDLKKTLQLQHFLQTLEQKTSPSKHKRKRTKYRRTKKSKHHSRKKTTSSSSSSERDSTTGRESESS.

2 disordered regions span residues 1–47 (MTFY…QSNT) and 78–130 (QTLE…SESS). The segment covering 13 to 33 (QWKQLQTQQNKKNSPRPVTSS) has biased composition (polar residues). Residues 86–110 (PSKHKRKRTKYRRTKKSKHHSRKKT) show a composition bias toward basic residues. Basic and acidic residues predominate over residues 117 to 130 (SERDSTTGRESESS).

This is an uncharacterized protein from Torque teno mini virus 1 (isolate TLMV-CBD279).